A 237-amino-acid polypeptide reads, in one-letter code: Chalcone--flavanone isomerase 1 (237 aa).

Residues Thr-48, Asn-113, and Ser-190 each coordinate substrate.

Belongs to the chalcone isomerase family.

It carries out the reaction a chalcone = a flavanone.. The protein operates within secondary metabolite biosynthesis; flavonoid biosynthesis. In terms of biological role, catalyzes the intramolecular cyclization of bicyclic chalcones into tricyclic (S)-flavanones. Responsible for the isomerization of 4,2',4',6'-tetrahydroxychalcone (also termed chalcone) into naringenin. This is Chalcone--flavanone isomerase 1 (CHI1) from Fragaria ananassa (Strawberry).